The chain runs to 115 residues: Large ribosomal subunit protein eL30 (115 aa).

Ser-10 and Ser-16 each carry phosphoserine. N6-acetyllysine; alternate is present on Lys-26. Residue Lys-26 forms a Glycyl lysine isopeptide (Lys-Gly) (interchain with G-Cter in SUMO2); alternate linkage.

Belongs to the eukaryotic ribosomal protein eL30 family. As to quaternary structure, component of the large ribosomal subunit.

Its subcellular location is the cytoplasm. Component of the large ribosomal subunit. The ribosome is a large ribonucleoprotein complex responsible for the synthesis of proteins in the cell. The polypeptide is Large ribosomal subunit protein eL30 (RPL30) (Oryctolagus cuniculus (Rabbit)).